An 87-amino-acid polypeptide reads, in one-letter code: Small ribosomal subunit protein bS20 (87 aa).

Belongs to the bacterial ribosomal protein bS20 family.

Its function is as follows. Binds directly to 16S ribosomal RNA. In Lachnoclostridium phytofermentans (strain ATCC 700394 / DSM 18823 / ISDg) (Clostridium phytofermentans), this protein is Small ribosomal subunit protein bS20.